The following is a 50-amino-acid chain: Small nuclear ribonucleoprotein Sm D2 (50 aa).

Positions Met-1–Xaa-36 are disordered. At Ser-2 the chain carries N-acetylserine. Glycyl lysine isopeptide (Lys-Gly) (interchain with G-Cter in SUMO2) cross-links involve residues Lys-6 and Lys-8. Over residues Pro-7 to Glu-21 the composition is skewed to basic and acidic residues. Position 9 is a phosphoserine (Ser-9). A Phosphothreonine modification is found at Thr-12.

It belongs to the snRNP core protein family. In terms of assembly, core component of the spliceosomal U1, U2, U4 and U5 small nuclear ribonucleoproteins (snRNPs), the building blocks of the spliceosome. Most spliceosomal snRNPs contain a common set of Sm proteins, SNRPB, SNRPD1, SNRPD2, SNRPD3, SNRPE, SNRPF and SNRPG that assemble in a heptameric protein ring on the Sm site of the small nuclear RNA to form the core snRNP. Component of the U1 snRNP. The U1 snRNP is composed of the U1 snRNA and the 7 core Sm proteins SNRPB, SNRPD1, SNRPD2, SNRPD3, SNRPE, SNRPF and SNRPG, and at least three U1 snRNP-specific proteins SNRNP70/U1-70K, SNRPA/U1-A and SNRPC/U1-C. Component of the U4/U6-U5 tri-snRNP complex composed of the U4, U6 and U5 snRNAs and at least PRPF3, PRPF4, PRPF6, PRPF8, PRPF31, SNRNP200, TXNL4A, SNRNP40, SNRPB, SNRPD1, SNRPD2, SNRPD3, SNRPE, SNRPF, SNRPG, DDX23, CD2BP2, PPIH, SNU13, EFTUD2, SART1 and USP39, plus LSM2, LSM3, LSM4, LSM5, LSM6, LSM7 and LSM8. Component of the minor spliceosome, which splices U12-type introns. Part of the SMN-Sm complex that contains SMN1, GEMIN2/SIP1, DDX20/GEMIN3, GEMIN4, GEMIN5, GEMIN6, GEMIN7, GEMIN8, STRAP/UNRIP and the Sm proteins SNRPB, SNRPD1, SNRPD2, SNRPD3, SNRPE, SNRPF and SNRPG; catalyzes core snRNPs assembly. Forms a 6S pICln-Sm complex composed of CLNS1A/pICln, SNRPD1, SNRPD2, SNRPE, SNRPF and SNRPG; ring-like structure where CLNS1A/pICln mimics additional Sm proteins and which is unable to assemble into the core snRNP. Interacts with SMN1; the interaction is direct. Interacts with GEMIN2; the interaction is direct. Interacts with SNRPD1; the interaction is direct. Interacts with SNRPF; the interaction is direct.

The protein resides in the cytoplasm. Its subcellular location is the cytosol. It is found in the nucleus. Functionally, plays a role in pre-mRNA splicing as a core component of the spliceosomal U1, U2, U4 and U5 small nuclear ribonucleoproteins (snRNPs), the building blocks of the spliceosome. Component of both the pre-catalytic spliceosome B complex and activated spliceosome C complexes. As a component of the minor spliceosome, involved in the splicing of U12-type introns in pre-mRNAs. The polypeptide is Small nuclear ribonucleoprotein Sm D2 (SNRPD2) (Sus scrofa (Pig)).